Consider the following 383-residue polypeptide: Succinyl-diaminopimelate desuccinylase (383 aa).

H70 contributes to the Zn(2+) binding site. D72 is an active-site residue. D103 is a Zn(2+) binding site. E137 functions as the Proton acceptor in the catalytic mechanism. Residues E138, E166, and H352 each contribute to the Zn(2+) site.

The protein belongs to the peptidase M20A family. DapE subfamily. In terms of assembly, homodimer. Zn(2+) serves as cofactor. Co(2+) is required as a cofactor.

The catalysed reaction is N-succinyl-(2S,6S)-2,6-diaminopimelate + H2O = (2S,6S)-2,6-diaminopimelate + succinate. Its pathway is amino-acid biosynthesis; L-lysine biosynthesis via DAP pathway; LL-2,6-diaminopimelate from (S)-tetrahydrodipicolinate (succinylase route): step 3/3. Functionally, catalyzes the hydrolysis of N-succinyl-L,L-diaminopimelic acid (SDAP), forming succinate and LL-2,6-diaminopimelate (DAP), an intermediate involved in the bacterial biosynthesis of lysine and meso-diaminopimelic acid, an essential component of bacterial cell walls. This is Succinyl-diaminopimelate desuccinylase from Hahella chejuensis (strain KCTC 2396).